Reading from the N-terminus, the 295-residue chain is Porphobilinogen deaminase (295 aa).

At Cys-241 the chain carries S-(dipyrrolylmethanemethyl)cysteine.

Belongs to the HMBS family. As to quaternary structure, monomer. Dipyrromethane is required as a cofactor.

The catalysed reaction is 4 porphobilinogen + H2O = hydroxymethylbilane + 4 NH4(+). It participates in porphyrin-containing compound metabolism; protoporphyrin-IX biosynthesis; coproporphyrinogen-III from 5-aminolevulinate: step 2/4. In terms of biological role, tetrapolymerization of the monopyrrole PBG into the hydroxymethylbilane pre-uroporphyrinogen in several discrete steps. The sequence is that of Porphobilinogen deaminase from Lachnospira eligens (strain ATCC 27750 / DSM 3376 / VPI C15-48 / C15-B4) (Eubacterium eligens).